Consider the following 363-residue polypeptide: MKAATAIIDRRALRHNFQQIRKFAPHSRLIAVVKANAYGHGLLETAKILNQADCYGVARIGEALMLRSGGIVKPILLLEGFFSASDLPVLVANNIETAVHSEEQLQALENAGLERPIRVWMKLDTGMHRLGVRPEQAEAFYRRLCACPNVAQPVNFMSHFSCADEPDSGRTEVQLACFDDFVRGKTGEQSIAASGGILLWPQSHRDMVRPGIIMYGVSPQADLSLAADHYGLQPAMTLQSSLIAVREHKAGEPVGYGGAWVAQRDTRLGVVAIGYGDGYPRSAPSGTPVLINGREVPIVGRVSMDMISVDLGPQAADRVGDNVIMWGPGLPVEKVAACTGISAYELITKLTSRVAMEYIGEEA.

The active-site Proton acceptor; specific for D-alanine is the lysine 34. An N6-(pyridoxal phosphate)lysine modification is found at lysine 34. A substrate-binding site is contributed by arginine 129. The Proton acceptor; specific for L-alanine role is filled by tyrosine 256. Methionine 304 contributes to the substrate binding site.

It belongs to the alanine racemase family. Requires pyridoxal 5'-phosphate as cofactor.

It carries out the reaction L-alanine = D-alanine. Its pathway is amino-acid biosynthesis; D-alanine biosynthesis; D-alanine from L-alanine: step 1/1. Functionally, catalyzes the interconversion of L-alanine and D-alanine. May also act on other amino acids. This chain is Alanine racemase (alr), found in Edwardsiella ictaluri (strain 93-146).